The primary structure comprises 655 residues: Archaeal Lon protease (655 aa).

The Cytoplasmic segment spans residues 1 to 123 (MEENIESVEE…KAEREKRDRS (123 aa)). Position 57–64 (57–64 (GEPGTGKS)) interacts with ATP. The helical transmembrane segment at 124-144 (RSIMFVIFSVVLLGIIAAIVL) threads the bilayer. Position 145 (R145) is a topological domain, extracellular. A helical transmembrane segment spans residues 146 to 166 (SITLIFFAIMAAAFLYMAMAF). At 167–655 (NPVIRNEKAM…ASTRAGQNVA (489 aa)) the chain is on the cytoplasmic side. The Lon proteolytic domain maps to 433 to 618 (GSVVGMVNGL…EDVLKVALVN (186 aa)). Active-site residues include S525 and K568.

It belongs to the peptidase S16 family. Archaeal LonB subfamily. As to quaternary structure, homohexamer. Organized in a ring with a central cavity.

Its subcellular location is the cell membrane. In terms of biological role, ATP-dependent serine protease that mediates the selective degradation of mutant and abnormal proteins as well as certain short-lived regulatory proteins. Degrades polypeptides processively. The chain is Archaeal Lon protease from Thermoplasma volcanium (strain ATCC 51530 / DSM 4299 / JCM 9571 / NBRC 15438 / GSS1).